Here is an 87-residue protein sequence, read N- to C-terminus: Small ribosomal subunit protein bS20 (87 aa).

A compositionally biased stretch (basic residues) spans 1–10 (MANIKSKQKR). A disordered region spans residues 1 to 27 (MANIKSKQKRILTNEKSRQRNKSVRSA).

Belongs to the bacterial ribosomal protein bS20 family.

In terms of biological role, binds directly to 16S ribosomal RNA. The polypeptide is Small ribosomal subunit protein bS20 (Corynebacterium aurimucosum (strain ATCC 700975 / DSM 44827 / CIP 107346 / CN-1) (Corynebacterium nigricans)).